The primary structure comprises 625 residues: tRNA uridine 5-carboxymethylaminomethyl modification enzyme MnmG (625 aa).

Residues 13-18, valine 125, and serine 182 each bind FAD; that span reads GGGHAG. An NAD(+)-binding site is contributed by 276 to 290; the sequence is GPRYCPSIEDKITRF. Residue glutamine 373 participates in FAD binding.

Belongs to the MnmG family. Homodimer. Heterotetramer of two MnmE and two MnmG subunits. FAD serves as cofactor.

Its subcellular location is the cytoplasm. Its function is as follows. NAD-binding protein involved in the addition of a carboxymethylaminomethyl (cmnm) group at the wobble position (U34) of certain tRNAs, forming tRNA-cmnm(5)s(2)U34. In Lactococcus lactis subsp. lactis (strain IL1403) (Streptococcus lactis), this protein is tRNA uridine 5-carboxymethylaminomethyl modification enzyme MnmG.